The following is a 275-amino-acid chain: tRNA-splicing endonuclease subunit SEN34 (275 aa).

Residues tyrosine 209, histidine 217, and lysine 250 contribute to the active site.

It belongs to the tRNA-intron endonuclease family. As to quaternary structure, heterotetramer composed of SEN2, SEN15, SEN34 and SEN54. Interacts directly with SEN15.

The protein resides in the nucleus. Its subcellular location is the endomembrane system. It localises to the mitochondrion outer membrane. It catalyses the reaction pretRNA = a 3'-half-tRNA molecule with a 5'-OH end + a 5'-half-tRNA molecule with a 2',3'-cyclic phosphate end + an intron with a 2',3'-cyclic phosphate and a 5'-hydroxyl terminus.. Its function is as follows. Constitutes one of the two catalytic subunit of the tRNA-splicing endonuclease complex, a complex responsible for identification and cleavage of the splice sites in pre-tRNA. It cleaves pre-tRNA at the 5'- and 3'-splice sites to release the intron. The products are an intron and two tRNA half-molecules bearing 2',3'-cyclic phosphate and 5'-OH termini. There are no conserved sequences at the splice sites, but the intron is invariably located at the same site in the gene, placing the splice sites an invariant distance from the constant structural features of the tRNA body. It probably carries the active site for 3'-splice site cleavage. The sequence is that of tRNA-splicing endonuclease subunit SEN34 (SEN34) from Saccharomyces cerevisiae (strain ATCC 204508 / S288c) (Baker's yeast).